We begin with the raw amino-acid sequence, 299 residues long: GDNF family receptor alpha-4 (299 aa).

An N-terminal signal peptide occupies residues 1 to 20 (MVRCLGPALLLLLLLGSASS). Positions 145 to 198 (RGLSPAHRPPAAQASPPGLSGLVHPSAQRPRRLPAGPGRPLPARLRGPRGVPAG) are disordered. Residues 177–198 (LPAGPGRPLPARLRGPRGVPAG) show a composition bias toward low complexity. Asn208 carries N-linked (GlcNAc...) asparagine glycosylation. Gly278 carries the GPI-anchor amidated glycine lipid modification. Residues 279–299 (RALERRSLLSILPVLALPALL) constitute a propeptide, removed in mature form.

The protein belongs to the GDNFR family. Interacts with ARTN ligand and RET: forms a 2:2:2 ternary complex composed of ARTN ligand, GFRA3 and RET receptor. Interacts with SORL1. As to expression, predominantly expressed in the adult thyroid gland. Low levels also found in fetal adrenal and thyroid glands.

The protein localises to the cell membrane. The protein resides in the secreted. In terms of biological role, receptor for persephin (PSPN), a growth factor that exhibits neurotrophic activity on mesencephalic dopaminergic and motor neurons. Acts by binding to its coreceptor, GFRA4, leading to autophosphorylation and activation of the RET receptor. May be important in C-cell development and, in the postnatal development of the adrenal medulla. The chain is GDNF family receptor alpha-4 (GFRA4) from Homo sapiens (Human).